The sequence spans 200 residues: Protein GrpE (200 aa).

The segment at 15–47 (DLEMDLNEEELEESEVNEDKEFEELDKSEEENE) is disordered. The segment covering 16–47 (LEMDLNEEELEESEVNEDKEFEELDKSEEENE) has biased composition (acidic residues).

Belongs to the GrpE family. In terms of assembly, homodimer.

The protein localises to the cytoplasm. In terms of biological role, participates actively in the response to hyperosmotic and heat shock by preventing the aggregation of stress-denatured proteins, in association with DnaK and GrpE. It is the nucleotide exchange factor for DnaK and may function as a thermosensor. Unfolded proteins bind initially to DnaJ; upon interaction with the DnaJ-bound protein, DnaK hydrolyzes its bound ATP, resulting in the formation of a stable complex. GrpE releases ADP from DnaK; ATP binding to DnaK triggers the release of the substrate protein, thus completing the reaction cycle. Several rounds of ATP-dependent interactions between DnaJ, DnaK and GrpE are required for fully efficient folding. The chain is Protein GrpE from Clostridium tetani (strain Massachusetts / E88).